The sequence spans 177 residues: MTTGLPSQTQVIELLGGEFARAGYEIEDVVIDHRARPPRITVVADGDTTLDLDTIAVLSRSASSLLDSLDNIGDSYVLEVSSPGIDRPLTSEKHFRRARGRKVELTLADGSQLTGRIGALQSGSLDLVVRAGREWKVREIPLAEVEKAVVQVEFSPPNPAELELATTGRAAGTEVEA.

It belongs to the RimP family.

Its subcellular location is the cytoplasm. Required for maturation of 30S ribosomal subunits. In Mycobacterium marinum (strain ATCC BAA-535 / M), this protein is Ribosome maturation factor RimP.